A 423-amino-acid chain; its full sequence is MKEIIARHKAGEHLGICSVCSAHPLVIESALLFDLNTDNKVLIEATSNQVNQFGGYTGMKPADFRDFVYGIAQEVGFPRERLILGGDHLGPNCWQNEPAAAAMEKSVELIKAYVAAGFSKIHLDASMSCADDPTPLDPMVVARRAAVLCKAAEGTANEEQKCHLTYVIGTEVPVPGGEASTIGSVHVTREVDAARTLETHQIAFRESGLEEALSRVIAIVVQPGVEFDHTQIIHYQPQAAQALSAWIKETPMVYEAHSTDYQTRQAYRALVRDHYAILKVGPALTFALREAIFALAQMENELISPEQRSRVLEVIDEVMLNEPGYWKKYYRPTWSQAMVDIHFSLSDRIRYYWPHPRIRQSVEKLIANLNNVTLPLGLISQFMPVQFERLSEGVLTPTPHNLIIDKIQDVLRAYRFGCTPDVA.

This sequence belongs to the GatZ/KbaZ family. GatZ subfamily. Forms a complex with GatY.

It functions in the pathway carbohydrate metabolism; D-tagatose 6-phosphate degradation; D-glyceraldehyde 3-phosphate and glycerone phosphate from D-tagatose 6-phosphate: step 2/2. In terms of biological role, component of the tagatose-1,6-bisphosphate aldolase GatYZ that is required for full activity and stability of the Y subunit. Could have a chaperone-like function for the proper and stable folding of GatY. When expressed alone, GatZ does not show any aldolase activity. Is involved in the catabolism of galactitol. The sequence is that of D-tagatose-1,6-bisphosphate aldolase subunit GatZ from Salmonella typhimurium (strain LT2 / SGSC1412 / ATCC 700720).